The following is a 215-amino-acid chain: MFVLKARHLMAAGLVSLAAWSAGAQAGAIEQLNAFVSNVTTARGEFVQRQVKGGANGSPLRVAGTSSGDFTFSRPGRFVWRYLKPYEQQLSADGQMLYIYDKDLSQVTERKLDASLGSSPAAILFGSNDLAKNFVLKEGGTKDGIDWVELTPKAKDTQFERVAIGFRAGELEGMELRDAFGNTTLLTFSHIQKNPQLPASAFRFVPPKGADVIKQ.

Positions 1–24 (MFVLKARHLMAAGLVSLAAWSAGA) are cleaved as a signal peptide.

Belongs to the LolA family. In terms of assembly, monomer.

It localises to the periplasm. Participates in the translocation of lipoproteins from the inner membrane to the outer membrane. Only forms a complex with a lipoprotein if the residue after the N-terminal Cys is not an aspartate (The Asp acts as a targeting signal to indicate that the lipoprotein should stay in the inner membrane). The protein is Outer-membrane lipoprotein carrier protein of Ralstonia nicotianae (strain ATCC BAA-1114 / GMI1000) (Ralstonia solanacearum).